Consider the following 193-residue polypeptide: MGRARDAILDALENLSGDELKKFKMKLLTVQLREGYGRIPRGALLQMDAIDLTDKLVSYYLESYGLELTMTVLRDMGLQELAEQLQTTKEESGAVAAAASVPAQSTARTGHFVDQHRQALIARVTEVDGVLDALHGSVLTEGQYQAVRAETTSQDKMRKLFSFVPSWNLTCKDSLLQALKEIHPYLVMDLEQS.

A Pyrin domain is found at 1–91 (MGRARDAILD…AEQLQTTKEE (91 aa)). Glycyl lysine isopeptide (Lys-Gly) (interchain with G-Cter in ubiquitin) cross-links involve residues K55 and K172. One can recognise a CARD domain in the interval 105 to 193 (STARTGHFVD…PYLVMDLEQS (89 aa)). S193 is subject to Phosphoserine.

In terms of assembly, self-associates; enforced oligomerization induces apoptosis, NF-kappa-B regulation and interleukin-1 beta secretion. Homooligomers can form disk-like particles of approximately 12 nm diameter and approximately 1 nm height. Component of several inflammasomes containing one pattern recognition receptor/sensor, such as NLRP2, NLRP3, NLRP6, NLRC4, AIM2, MEFV or NOD2, and probably NLRC4 or NLRP12. Major component of the ASC pyroptosome, a 1-2 um supramolecular assembly (one per macrophage cell) which consists of oligomerized PYCARD dimers and CASP1. Interacts with CASP1 (precursor form); the interaction induces activation of CASP1 leading to the processing of interleukin-1 beta; PYCARD competes with RIPK2 for binding to CASP1. Interacts with NLRP3; the interaction requires the homooligomerization of NLRP3. Interacts with NLRP2, NLRC4, MEFV, CARD16, AIM2, NOD2, RIGI, RIPK2, PYDC1, PYDC2, NLRP10, CHUK, IKBKB and BAX. Interacts with CASP8. Component of the AIM2 PANoptosome complex, a multiprotein complex that drives inflammatory cell death (PANoptosis). Post-translationally, phosphorylated. 'Lys-63'-linked polyubiquitination by TRAF3 is critical for speck formation and inflammasome activation. 'Lys-63'-linked deubiquitinated by USP50; a crucial step for NLRP3-mediated inflammasome activation. 'Lys-63'-linked polyubiquitination by PELI1 is also critical for speck formation and inflammasome activation. Deubiquitinated by USP3 that cleaves 'Lys-48'-linked ubiquitin chains and strengthens its stability by blocking proteasomal degradation. As to expression, expressed in small intestine, colon, thymus, spleen, brain, heart, skeletal muscle, kidney, lung and liver.

The protein localises to the cytoplasm. The protein resides in the inflammasome. Its subcellular location is the endoplasmic reticulum. It localises to the mitochondrion. It is found in the nucleus. Its function is as follows. Functions as a key mediator in apoptosis and inflammation. Promotes caspase-mediated apoptosis involving predominantly caspase-8 and also caspase-9 in a probable cell type-specific manner. Involved in activation of the mitochondrial apoptotic pathway, promotes caspase-8-dependent proteolytic maturation of BID independently of FADD in certain cell types and also mediates mitochondrial translocation of BAX and activates BAX-dependent apoptosis coupled to activation of caspase-9, -2 and -3. Involved in innate immune response by acting as an integral adapter in the assembly of various inflammasomes (NLRP2, NLRP3, NLRP6 and AIM2) which recruit and activate caspase-1 leading to processing and secretion of pro-inflammatory cytokines. Caspase-1-dependent inflammation leads to macrophage pyroptosis, a form of cell death. The function as activating adapter in different types of inflammasomes is mediated by the pyrin and CARD domains and their homotypic interactions. Clustered PYCARD nucleates the formation of caspase-1 filaments through the interaction of their respective CARD domains, acting as a platform for of caspase-1 polymerization. In the NLRC4 inflammasomes seems not be required but facilitates the processing of procaspase-1. In cooperation with NOD2 involved in an inflammasome activated by bacterial muramyl dipeptide leading to caspase-1 activation. May be involved in RIGI-triggered pro-inflammatory responses and inflammasome activation. In collaboration with AIM2 which detects cytosolic double-stranded DNA may also be involved in a caspase-1-independent cell death that involves caspase-8. In adaptive immunity may be involved in maturation of dendritic cells to stimulate T-cell immunity and in cytoskeletal rearrangements coupled to chemotaxis and antigen uptake may be involved in post-transcriptional regulation of the guanine nucleotide exchange factor DOCK2; the latter function is proposed to involve the nuclear form. Also involved in transcriptional activation of cytokines and chemokines independent of the inflammasome; this function may involve AP-1, NF-kappa-B, MAPK and caspase-8 signaling pathways. For regulation of NF-kappa-B activating and inhibiting functions have been reported. Modulates NF-kappa-B induction at the level of the IKK complex by inhibiting kinase activity of CHUK and IKBK. Proposed to compete with RIPK2 for association with CASP1 thereby down-regulating CASP1-mediated RIPK2-dependent NF-kappa-B activation and activating interleukin-1 beta processing. Modulates host resistance to DNA virus infection, probably by inducing the cleavage of and inactivating CGAS in presence of cytoplasmic double-stranded DNA. This is Apoptosis-associated speck-like protein containing a CARD (Pycard) from Mus musculus (Mouse).